A 530-amino-acid polypeptide reads, in one-letter code: Pre-mRNA-splicing factor PRP9 (530 aa).

A Matrin-type 1 zinc finger spans residues 280 to 310 (IYCPFCSRWFKTSSVFESHLVGKIHKKNESK). Positions 367-388 (DSTEKEGAEQVDGEQRDGQLQE) are disordered. Basic and acidic residues predominate over residues 368–388 (STEKEGAEQVDGEQRDGQLQE). A Matrin-type 2 zinc finger spans residues 421 to 452 (YRCEICSNKVYNGRRTFERHFNEERHIYHLRC). The interval 488–516 (AVPPKPNPSQLKVPTELELEEEDEEGNVM) is disordered. The segment covering 504-513 (LELEEEDEEG) has biased composition (acidic residues).

The protein belongs to the SF3A3 family. As to quaternary structure, belongs to the CWC complex (or CEF1-associated complex), a spliceosome sub-complex reminiscent of a late-stage spliceosome composed of the U2, U5 and U6 snRNAs and at least BUD13, BUD31, BRR2, CDC40, CEF1, CLF1, CUS1, CWC2, CWC15, CWC21, CWC22, CWC23, CWC24, CWC25, CWC27, ECM2, HSH155, IST3, ISY1, LEA1, MSL1, NTC20, PRP8, PRP9, PRP11, PRP19, PRP21, PRP22, PRP45, PRP46, SLU7, SMB1, SMD1, SMD2, SMD3, SMX2, SMX3, SNT309, SNU114, SPP2, SYF1, SYF2, RSE1 and YJU2.

It localises to the nucleus. Functionally, mRNA splicing factors, PRP9, PRP11, and PRP21, are necessary for binding of the U2 snRNP to the pre-mRNA in an early step of spliceosome assembly. The chain is Pre-mRNA-splicing factor PRP9 (PRP9) from Saccharomyces cerevisiae (strain ATCC 204508 / S288c) (Baker's yeast).